The chain runs to 506 residues: Sodium-coupled neutral amino acid symporter 2 (506 aa).

A disordered region spans residues Met1–Asn23. Over Met1–Ser76 the chain is Cytoplasmic. The segment at Met1–Met96 is regulates protein turnover upon amino acid deprivation. Residues Ser12, Ser21, Ser22, and Ser55 each carry the phosphoserine modification. The helical transmembrane segment at Val77–Met96 threads the bilayer. A Na(+)-binding site is contributed by Asn82. The Extracellular segment spans residues Ala97–Ala102. A helical transmembrane segment spans residues Leu103–Leu123. Residues Lys124–Asn158 lie on the Cytoplasmic side of the membrane. The chain crosses the membrane as a helical span at residues Ile159 to Ile177. The Extracellular portion of the chain corresponds to Gln178 to Gly188. The chain crosses the membrane as a helical span at residues Leu189–Leu209. The Cytoplasmic segment spans residues Ser210–Tyr217. A helical membrane pass occupies residues Leu218–Phe238. At Lys239–Thr292 the chain is on the extracellular side. Cysteines 245 and 281 form a disulfide. Residues Asn258 and Asn274 are each glycosylated (N-linked (GlcNAc...) asparagine). Residues Val293 to Tyr313 traverse the membrane as a helical segment. The Cytoplasmic portion of the chain corresponds to Glu314–Lys329. Residues Ile330–Phe350 traverse the membrane as a helical segment. Residues Tyr351–Leu371 lie on the Extracellular side of the membrane. A helical membrane pass occupies residues Leu372–Phe392. Thr386 serves as a coordination point for Na(+). Topologically, residues Pro393–His413 are cytoplasmic. Residues Ser414–Ile434 traverse the membrane as a helical segment. The Extracellular segment spans residues Arg435–Asp436. The helical transmembrane segment at Ile437–Phe457 threads the bilayer. Residues Tyr458–Lys472 are Cytoplasmic-facing. Residues Ile473–Leu495 traverse the membrane as a helical segment. The Extracellular portion of the chain corresponds to Asp496–His506.

It belongs to the amino acid/polyamine transporter 2 family. Post-translationally, polyubiquitination by NEDD4L regulates the degradation and the activity of SLC38A2.

The protein resides in the cell membrane. It catalyses the reaction L-alanine(in) + Na(+)(in) = L-alanine(out) + Na(+)(out). The enzyme catalyses glycine(in) + Na(+)(in) = glycine(out) + Na(+)(out). It carries out the reaction L-serine(in) + Na(+)(in) = L-serine(out) + Na(+)(out). The catalysed reaction is L-proline(in) + Na(+)(in) = L-proline(out) + Na(+)(out). It catalyses the reaction L-methionine(in) + Na(+)(in) = L-methionine(out) + Na(+)(out). The enzyme catalyses L-histidine(in) + Na(+)(in) = L-histidine(out) + Na(+)(out). It carries out the reaction L-asparagine(in) + Na(+)(in) = L-asparagine(out) + Na(+)(out). The catalysed reaction is L-glutamine(in) + Na(+)(in) = L-glutamine(out) + Na(+)(out). It catalyses the reaction L-threonine(in) + Na(+)(in) = L-threonine(out) + Na(+)(out). The enzyme catalyses L-leucine(in) + Na(+)(in) = L-leucine(out) + Na(+)(out). It carries out the reaction L-phenylalanine(in) + Na(+)(in) = L-phenylalanine(out) + Na(+)(out). Inhibited by N-methyl-D-glucamine. Inhibited by choline. Allosteric regulation of sodium ions binding by pH. Symporter that cotransports neutral amino acids and sodium ions from the extracellular to the intracellular side of the cell membrane. The transport is pH-sensitive, Li(+)-intolerant, electrogenic, driven by the Na(+) electrochemical gradient and cotransports of neutral amino acids and sodium ions with a stoichiometry of 1:1. May function in the transport of amino acids at the blood-brain barrier. May function in the transport of amino acids in the supply of maternal nutrients to the fetus through the placenta. Maintains a key metabolic glutamine/glutamate balance underpinning retrograde signaling by dendritic release of the neurotransmitter glutamate. Transports L-proline in differentiating osteoblasts for the efficient synthesis of proline-enriched proteins and provides proline essential for osteoblast differentiation and bone formation during bone development. The sequence is that of Sodium-coupled neutral amino acid symporter 2 from Bos taurus (Bovine).